Reading from the N-terminus, the 287-residue chain is Cbb3-type cytochrome c oxidase subunit FixP (287 aa).

The Cytoplasmic segment spans residues 1–33 (MSQKHIDELSGVETTGHEWDGIQELNNPMPRWW). A helical membrane pass occupies residues 34-54 (IWTFYVTILWAIGYAIAYPAI). At 55-287 (PMITSATNGY…IFVHALGGGT (233 aa)) the chain is on the periplasmic side. 2 Cytochrome c domains span residues 108 to 196 (FAIA…WGLT) and 203 to 284 (GLAA…HALG). Residues C121, C124, H125, M173, C216, C219, H220, and M261 each coordinate heme c.

It belongs to the CcoP / FixP family. Component of the cbb3-type cytochrome c oxidase at least composed of FixN, FixO, FixQ and FixP. The cofactor is heme c.

It is found in the cell inner membrane. It functions in the pathway energy metabolism; oxidative phosphorylation. In terms of biological role, C-type cytochrome. Part of the cbb3-type cytochrome c oxidase complex. FixP subunit is required for transferring electrons from donor cytochrome c via its heme groups to FixO subunit. From there, electrons are shuttled to the catalytic binuclear center of FixN subunit where oxygen reduction takes place. The complex also functions as a proton pump. The polypeptide is Cbb3-type cytochrome c oxidase subunit FixP (Rhizobium etli (strain ATCC 51251 / DSM 11541 / JCM 21823 / NBRC 15573 / CFN 42)).